Reading from the N-terminus, the 324-residue chain is MAAAGGGATRGARMLAERIRAERKVLEGAARETSRKNAPTIVYLRELKSQVVREDPELVLVNKPHGLPVHGGPTVERSVASLLPALAKHHFGWKAEPLKLCHRLDRDTTGALILARTTEAAERVQQALREREVHRVYWALCLGTPSPREGILDIPIMEKETSGPQKHYKMALSPRFRVSEEGAVERVRVPRSAHEAVTRYRTLGAASGASLVELHPITGVKHQLRVHLALGLNCPILGDHKYSHWGRLAPQKPPDSVLRALGLTVPQARTLSLHLHAVQLTLPSSDGSTPIVLQCPLPYTFRKTLRKLRIPPPDLESLQPPPTD.

Residues methionine 1–glycine 11 constitute a mitochondrion transit peptide. Aspartate 105 is an active-site residue.

This sequence belongs to the pseudouridine synthase RluA family.

It is found in the mitochondrion matrix. The protein resides in the nucleus. The protein localises to the cytoplasm. The catalysed reaction is uridine in 5S rRNA = pseudouridine in 5S rRNA. The enzyme catalyses a uridine in tRNA = a pseudouridine in tRNA. It catalyses the reaction a uridine in mRNA = a pseudouridine in mRNA. In terms of biological role, catalyzes uridine to pseudouridine isomerization (pseudouridylation) of different mitochondrial RNA substrates. Acts on position 1397 in 16S mitochondrial ribosomal RNA (16S mt-rRNA). This modification is required for the assembly of 16S mt-rRNA into a functional mitochondrial ribosome. Acts on position 39 in mitochondrial tRNA(Phe). Also catalyzes pseudouridylation of mRNAs in nucleus: acts as a regulator of pre-mRNA splicing by mediating pseudouridylation of pre-mRNAs at locations associated with alternatively spliced regions. Pseudouridylation of pre-mRNAs near splice sites directly regulates mRNA splicing and mRNA 3'-end processing. This is Pseudouridylate synthase RPUSD4, mitochondrial from Xenopus tropicalis (Western clawed frog).